The following is a 346-amino-acid chain: Phosphate acyltransferase (346 aa).

It belongs to the PlsX family. Homodimer. Probably interacts with PlsY.

It localises to the cytoplasm. The catalysed reaction is a fatty acyl-[ACP] + phosphate = an acyl phosphate + holo-[ACP]. The protein operates within lipid metabolism; phospholipid metabolism. Functionally, catalyzes the reversible formation of acyl-phosphate (acyl-PO(4)) from acyl-[acyl-carrier-protein] (acyl-ACP). This enzyme utilizes acyl-ACP as fatty acyl donor, but not acyl-CoA. The chain is Phosphate acyltransferase from Synechococcus elongatus (strain ATCC 33912 / PCC 7942 / FACHB-805) (Anacystis nidulans R2).